Here is a 223-residue protein sequence, read N- to C-terminus: Interleukin-12 subunit alpha (223 aa).

A signal peptide spans 1-23 (MCPSARSLLLLASLVLLEHLGSA). N-linked (GlcNAc...) asparagine glycans are attached at residues Asn-41, Asn-79, Asn-121, and Asn-176. 2 disulfide bridges follow: Cys-66/Cys-200 and Cys-87/Cys-125.

This sequence belongs to the IL-6 superfamily. In terms of assembly, heterodimer with IL12B; disulfide-linked. This heterodimer is known as interleukin IL-12. Heterodimer with EBI3/IL27B; not disulfide-linked. This heterodimer is known as interleukin IL-35. Interacts with NBR1; this interaction promotes IL-12 secretion.

Its subcellular location is the secreted. Heterodimerizes with IL12B to form the IL-12 cytokine or with EBI3/IL27B to form the IL-35 cytokine. IL-12 is primarily produced by professional antigen-presenting cells (APCs) such as B-cells and dendritic cells (DCs) as well as macrophages and granulocytes and regulates T-cell and natural killer-cell responses, induces the production of interferon-gamma (IFN-gamma), favors the differentiation of T-helper 1 (Th1) cells and is an important link between innate resistance and adaptive immunity. Mechanistically, exerts its biological effects through a receptor composed of IL12R1 and IL12R2 subunits. Binding to the receptor results in the rapid tyrosine phosphorylation of a number of cellular substrates including the JAK family kinases TYK2 and JAK2. In turn, recruited STAT4 gets phosphorylated and translocates to the nucleus where it regulates cytokine/growth factor responsive genes. As part of IL-35, plays essential roles in maintaining the immune homeostasis of the liver microenvironment and also functions as an immune-suppressive cytokine. Mediates biological events through unconventional receptors composed of IL12RB2 and gp130/IL6ST heterodimers or homodimers. Signaling requires the transcription factors STAT1 and STAT4, which form a unique heterodimer that binds to distinct DNA sites. In Marmota monax (Woodchuck), this protein is Interleukin-12 subunit alpha (IL12A).